We begin with the raw amino-acid sequence, 791 residues long: Probable phosphoketolase (791 aa).

The protein belongs to the XFP family. Thiamine diphosphate serves as cofactor.

This chain is Probable phosphoketolase, found in Pseudomonas putida (strain ATCC 700007 / DSM 6899 / JCM 31910 / BCRC 17059 / LMG 24140 / F1).